Here is a 380-residue protein sequence, read N- to C-terminus: Putative 8-amino-7-oxononanoate synthase (380 aa).

Arginine 18 contacts substrate. 106–107 (GY) lines the pyridoxal 5'-phosphate pocket. Residue histidine 131 coordinates substrate. Residues serine 179, 205-208 (DEAH), and 236-239 (TFGK) contribute to the pyridoxal 5'-phosphate site. The residue at position 239 (lysine 239) is an N6-(pyridoxal phosphate)lysine. A substrate-binding site is contributed by threonine 352.

This sequence belongs to the class-II pyridoxal-phosphate-dependent aminotransferase family. BioF subfamily. Homodimer. The cofactor is pyridoxal 5'-phosphate.

The enzyme catalyses 6-carboxyhexanoyl-[ACP] + L-alanine + H(+) = (8S)-8-amino-7-oxononanoate + holo-[ACP] + CO2. The protein operates within cofactor biosynthesis; biotin biosynthesis. Functionally, catalyzes the decarboxylative condensation of pimeloyl-[acyl-carrier protein] and L-alanine to produce 8-amino-7-oxononanoate (AON), [acyl-carrier protein], and carbon dioxide. The sequence is that of Putative 8-amino-7-oxononanoate synthase (bioF) from Haemophilus influenzae (strain ATCC 51907 / DSM 11121 / KW20 / Rd).